The sequence spans 489 residues: E3 ubiquitin-protein ligase RGLG1 (489 aa).

Over residues 1–10 (MGGGNSKEES) the composition is skewed to basic and acidic residues. Positions 1-125 (MGGGNSKEES…SQSQVADRKK (125 aa)) are disordered. A lipid anchor (N-myristoyl glycine) is attached at Gly2. Over residues 11–23 (SSPSSSSWASHQS) the composition is skewed to low complexity. The span at 34–57 (YPPPPTYAPAPSPAPAPAPVPAPS) shows a compositional bias: pro residues. Low complexity predominate over residues 58–75 (PASSYGPQYSQEGYASQP). Residues 76–88 (NNPPPPTYAPAPS) are compositionally biased toward pro residues. Positions 156 to 376 (NLIVGIDFTK…KETEFALSAL (221 aa)) constitute a VWFA domain. Residues 446–479 (CPICLSNPKNMAFGCGHQTCCECGPDLKVCPICR) form an RING-type zinc finger.

In terms of assembly, interacts with the heterodimer UBC35/UEV1B. Interacts with ERF053. Interacts with PP2CA. Post-translationally, N-myristoylated. Ubiquitously expressed.

Its subcellular location is the cell membrane. It is found in the nucleus. The enzyme catalyses S-ubiquitinyl-[E2 ubiquitin-conjugating enzyme]-L-cysteine + [acceptor protein]-L-lysine = [E2 ubiquitin-conjugating enzyme]-L-cysteine + N(6)-ubiquitinyl-[acceptor protein]-L-lysine.. E3 ubiquitin-protein ligase that mediates the formation of 'Lys-63'-linked ubiquitin chains. Regulates apical dominance by acting on the auxin transport proteins abundance. Together with RGLG5, mediates the ubiquitination and subsequent proteasomal degradation of the target protein PP2CA. Functions as a positive regulator of abscisic acid (ABA) signaling through ABA-dependent degradation of PP2CA, a major inhibitor of ABA signaling. Acts as a negative regulator of drought stress response. This Arabidopsis thaliana (Mouse-ear cress) protein is E3 ubiquitin-protein ligase RGLG1.